The chain runs to 176 residues: PPE family protein PPE57 (176 aa).

The protein belongs to the mycobacterial PPE family. In terms of assembly, interacts with human TLR2.

The protein resides in the secreted. It is found in the cell wall. Its subcellular location is the cell surface. Functionally, plays a key role in regulating innate and adaptive immune responses through human Toll-like receptor 2 (TLR2). Interacts with TLR2, leading to the subsequent activation of the mitogen-activated protein kinase (MAPK) and nuclear factor kappa B (NF-kappa-B) signaling pathways. Induces macrophage activation by augmenting the expression of several cell surface molecules (CD40, CD80, CD86 and MHC class II) and pro-inflammatory cytokines (TNF-alpha, IL-6 and IL-12p40) within macrophages. Also participates in adaptive immunity by directing Th1-polarised immune responses. Stimulates specific humoral and cellular immune responses in tuberculosis (TB) patients. Induces a strong IgG(1) antibody response and an increased Th1/Th2 type immune response in mice. The chain is PPE family protein PPE57 from Mycobacterium tuberculosis (strain ATCC 25618 / H37Rv).